We begin with the raw amino-acid sequence, 240 residues long: Competence protein ComFC (240 aa).

Belongs to the ComF/GntX family. In terms of assembly, monomer and dimer in solution. Interacts with ComFA and DprA; ComFA-ComFC form rings about 150 Angstroms in diameter with apparent 6-fold symmetry.

Functionally, involved in transformation (genetic competence for DNA uptake). The protein is Competence protein ComFC (comFC) of Bacillus subtilis (strain 168).